The following is a 377-amino-acid chain: Nitric oxide reductase FlRd-NAD(+) reductase (377 aa).

It belongs to the FAD-dependent oxidoreductase family. The cofactor is FAD.

The protein resides in the cytoplasm. The enzyme catalyses 2 reduced [nitric oxide reductase rubredoxin domain] + NAD(+) + H(+) = 2 oxidized [nitric oxide reductase rubredoxin domain] + NADH. It functions in the pathway nitrogen metabolism; nitric oxide reduction. In terms of biological role, one of at least two accessory proteins for anaerobic nitric oxide (NO) reductase. Reduces the rubredoxin moiety of NO reductase. The chain is Nitric oxide reductase FlRd-NAD(+) reductase from Shigella boydii serotype 18 (strain CDC 3083-94 / BS512).